The sequence spans 444 residues: Glycogen synthase (444 aa).

Arg15 is a binding site for ADP-alpha-D-glucose.

This sequence belongs to the glycosyltransferase 1 family. Bacterial/plant glycogen synthase subfamily.

The enzyme catalyses [(1-&gt;4)-alpha-D-glucosyl](n) + ADP-alpha-D-glucose = [(1-&gt;4)-alpha-D-glucosyl](n+1) + ADP + H(+). Its pathway is glycan biosynthesis; glycogen biosynthesis. Synthesizes alpha-1,4-glucan chains using ADP-glucose. The sequence is that of Glycogen synthase from Deinococcus radiodurans (strain ATCC 13939 / DSM 20539 / JCM 16871 / CCUG 27074 / LMG 4051 / NBRC 15346 / NCIMB 9279 / VKM B-1422 / R1).